We begin with the raw amino-acid sequence, 464 residues long: L-aspartate oxidase (464 aa).

FAD-binding positions include 8–11 and 37–44; these read SGLA and NSYLAQAG. The active-site Proton donor/acceptor is R248. FAD contacts are provided by residues E329 and 345 to 346; that span reads SL.

This sequence belongs to the FAD-dependent oxidoreductase 2 family. NadB subfamily. The cofactor is FAD.

Its subcellular location is the cytoplasm. It catalyses the reaction L-aspartate + O2 = iminosuccinate + H2O2. It functions in the pathway cofactor biosynthesis; NAD(+) biosynthesis; iminoaspartate from L-aspartate (oxidase route): step 1/1. Its function is as follows. Catalyzes the oxidation of L-aspartate to iminoaspartate, the first step in the de novo biosynthesis of NAD(+). The sequence is that of L-aspartate oxidase (nadB) from Pyrococcus furiosus (strain ATCC 43587 / DSM 3638 / JCM 8422 / Vc1).